The sequence spans 826 residues: Outer membrane usher protein YehB (826 aa).

The N-terminal stretch at 1–22 is a signal peptide; that stretch reads MLRMTPLASAIVALLLGIEAYA. Cys-809 and Cys-825 are oxidised to a cystine.

The protein belongs to the fimbrial export usher family.

The protein localises to the cell outer membrane. Part of the yehABCD fimbrial operon. Could contribute to adhesion to various surfaces in specific environmental niches. Probably involved in the export and assembly of fimbrial subunits across the outer membrane. This chain is Outer membrane usher protein YehB (yehB), found in Escherichia coli (strain K12).